The primary structure comprises 237 residues: 2',3'-cyclic-nucleotide 3'-phosphodiesterase (237 aa).

His21 functions as the Proton donor/acceptor in the catalytic mechanism. Thr23 contributes to the substrate binding site. The disordered stretch occupies residues His117–Asp137. His167 (proton donor/acceptor) is an active-site residue. Substrate is bound by residues Ser169 and Tyr172.

The protein belongs to the 2H phosphoesterase superfamily. CPD1 family.

The protein resides in the golgi apparatus. It catalyses the reaction a nucleoside 2',3'-cyclic phosphate + H2O = a nucleoside 2'-phosphate + H(+). In terms of biological role, involved in the metabolism of ADP-ribose 1',2'-cyclic phosphate which is produced as a consequence of tRNA splicing. The chain is 2',3'-cyclic-nucleotide 3'-phosphodiesterase (CPD1) from Debaryomyces hansenii (strain ATCC 36239 / CBS 767 / BCRC 21394 / JCM 1990 / NBRC 0083 / IGC 2968) (Yeast).